The primary structure comprises 146 residues: Endothelial differentiation-related factor 1 homolog (146 aa).

The interval 13–53 is disordered; sequence RKKGSAAQSKSKQAVTAAQRKGEAVETSKKWAAGQNKQHVV. Positions 17–31 are enriched in low complexity; sequence SAAQSKSKQAVTAAQ. Residues 32–41 show a composition bias toward basic and acidic residues; sequence RKGEAVETSK. Residues 80 to 134 enclose the HTH cro/C1-type domain; sequence IQQGRQNKGLTQKDLATKINEKPQIIAEYECGKAIPNNQVMGKIERAIGLKLRGK. Residues 91–110 constitute a DNA-binding region (H-T-H motif); the sequence is QKDLATKINEKPQIIAEYEC.

The protein localises to the nucleus. In terms of biological role, probable transcriptional coactivator. In Danio rerio (Zebrafish), this protein is Endothelial differentiation-related factor 1 homolog (edf1).